Consider the following 563-residue polypeptide: Membrane protein insertase YidC (563 aa).

The chain crosses the membrane as a helical span at residues 6 to 26 (TILWMIFSFSLLLLWNNWQIH). The interval 36 to 68 (PPASSAASPAEGQQAAANGQAATPSVPTTPAAA) is disordered. Transmembrane regions (helical) follow at residues 373–393 (WGWA…PLAA), 443–463 (LPMV…LASV), 482–502 (PYFI…KLNP), and 512–532 (VMMI…AGLV).

It belongs to the OXA1/ALB3/YidC family. Type 1 subfamily. As to quaternary structure, interacts with the Sec translocase complex via SecD. Specifically interacts with transmembrane segments of nascent integral membrane proteins during membrane integration.

Its subcellular location is the cell inner membrane. In terms of biological role, required for the insertion and/or proper folding and/or complex formation of integral membrane proteins into the membrane. Involved in integration of membrane proteins that insert both dependently and independently of the Sec translocase complex, as well as at least some lipoproteins. Aids folding of multispanning membrane proteins. The polypeptide is Membrane protein insertase YidC (Bordetella petrii (strain ATCC BAA-461 / DSM 12804 / CCUG 43448)).